The chain runs to 29 residues: Lambda-theraphotoxin-Ec2b (29 aa).

3 disulfides stabilise this stretch: Cys2-Cys16, Cys9-Cys21, and Cys15-Cys25.

This sequence belongs to the neurotoxin 30 (phrixotoxin) family. In terms of tissue distribution, expressed by the venom gland.

It localises to the secreted. Functionally, insect-selective neurotoxin that potently blocks insect calcium-activated potassium (BKCa) channels (Slo-type) in cockroach dorsal unpaired median (DUM) neurons (IC(50)=25.3 nM). This occurs in the absence of any shifts in the voltage dependence of activation. May interact with the turret and/or loop region of the external entrance to the channel and does not project deeply into the pore of the channel. In vivo, does not show toxicity in mice after intracerebroventricular injection of up to 25 pmol/g (1.8 ug/20 g mouse). The polypeptide is Lambda-theraphotoxin-Ec2b (Eucratoscelus constrictus (African red-rump baboon spider)).